A 231-amino-acid polypeptide reads, in one-letter code: ATP synthase subunit a (231 aa).

A run of 5 helical transmembrane segments spans residues 14–34, 78–98, 107–127, 174–194, and 196–216; these read GFLK…VLAV, YLGF…CTVI, SLST…FFGI, MIIG…MTAL, and LLTG…YIAA.

Belongs to the ATPase A chain family. In terms of assembly, F-type ATPases have 2 components, CF(1) - the catalytic core - and CF(0) - the membrane proton channel. CF(1) has five subunits: alpha(3), beta(3), gamma(1), delta(1), epsilon(1). CF(0) has three main subunits: a(1), b(2) and c(9-12). The alpha and beta chains form an alternating ring which encloses part of the gamma chain. CF(1) is attached to CF(0) by a central stalk formed by the gamma and epsilon chains, while a peripheral stalk is formed by the delta and b chains.

The protein resides in the cell inner membrane. Its function is as follows. Key component of the proton channel; it plays a direct role in the translocation of protons across the membrane. This Albidiferax ferrireducens (strain ATCC BAA-621 / DSM 15236 / T118) (Rhodoferax ferrireducens) protein is ATP synthase subunit a.